The sequence spans 380 residues: MFNTSEEVRIVTETIRQAARERIAPAAASVDATGELDGEVLSLLWDLGLMTLVFPPEFGGAEQSQGTLLCTAVEEIARHCASSSLMLIIQAVGSFPLLHGGSRELLERVLPRIVERRELAAYLVSEPGAGSDVGSIRTTAVRDGNEYVISGTKCFSTNGPVASYYTVLARTSENGRNGLSFFLVDGDAPGLKVGKIEKKLGQRGSKTSEMYLDEVRVPAGNLLGEENKGFLLAMKDFDMSRPAIGAQALGIAEGAFDQMLKHSRERKTFGQPLCEHQMIQQIIADSATKIEAARGLIYRAAALYDQGKRNTKLASMGKLFASDAAMQITTDAIQVFGGYGYMQDYPVERMFRDAKLTQIFEGANQIQRLVIAREILKEAA.

Belongs to the acyl-CoA dehydrogenase family. Homotetramer. FAD serves as cofactor.

The catalysed reaction is cyclohexane-1-carbonyl-CoA + oxidized [electron-transfer flavoprotein] + H(+) = cyclohex-1-ene-1-carbonyl-CoA + reduced [electron-transfer flavoprotein]. Its function is as follows. Acyl-CoA dehydrogenase involved in the anaerobic degradation of cyclohexane carboxylic acid (CHC). Catalyzes the 1,2-dehydrogenation of cyclohexane-1-carbonyl-CoA (CHCoA) to cyclohex-1-ene-1-carbonyl-CoA (CHeneCoA). An alternative substrate, cyclohex-3-ene-1-carboxyl-CoA can be converted to the corresponding cyclohexadiene-1-carboxyl-CoA isomers (30% rate compared to CHC). The sequence is that of Cyclohexane-1-carbonyl-CoA dehydrogenase from Geobacter metallireducens (strain ATCC 53774 / DSM 7210 / GS-15).